We begin with the raw amino-acid sequence, 336 residues long: Protein-lysine N-methyltransferase EFM3 (336 aa).

Residues Trp147, 173 to 175, Asp196, Leu232, and Ala251 contribute to the S-adenosyl-L-methionine site; that span reads GTG.

Belongs to the class I-like SAM-binding methyltransferase superfamily. EEF2KMT family.

It is found in the cytoplasm. S-adenosyl-L-methionine-dependent protein-lysine N-methyltransferase that methylates elongation factor 2. This is Protein-lysine N-methyltransferase EFM3 from Chaetomium thermophilum (strain DSM 1495 / CBS 144.50 / IMI 039719) (Thermochaetoides thermophila).